The primary structure comprises 298 residues: GTP cyclohydrolase FolE2 (298 aa).

This sequence belongs to the GTP cyclohydrolase IV family.

It catalyses the reaction GTP + H2O = 7,8-dihydroneopterin 3'-triphosphate + formate + H(+). It functions in the pathway cofactor biosynthesis; 7,8-dihydroneopterin triphosphate biosynthesis; 7,8-dihydroneopterin triphosphate from GTP: step 1/1. In terms of biological role, converts GTP to 7,8-dihydroneopterin triphosphate. The chain is GTP cyclohydrolase FolE2 from Xylella fastidiosa (strain 9a5c).